Here is a 492-residue protein sequence, read N- to C-terminus: MKKLKITGLSLIISGLLMAQAQAAEPVYPDQLRLFSLGQEVCGDKYRPVNREEAQSIKSNIVGMMGQWQISGLANGWVIMGPGYNGEIKPGSASSTWCYPTNPATGEIPTLSALDIPDGDEVDVQWRLVHDSANFIKPTSYLAHYLGYAWVGGNHSQYVGEDMDVTRDGDGWVIRGNNDGGCDGYRCGDKTSIKVSNFAYNLDPDSFKHGDVTQSDRQLVKTVVGWAINDSDTPQSGYDVTLRYDTATNWSKTNTYGLSEKVTTKNKFKWPLVGETELSIEIAANQSWASQNGGSTTTSLSQSVRPTVPAHSKIPVKIELYKADISYPYEFKADVSYDLTLSGFLRWGGNAWYTHPDNRPNWNHTFVIGPYKDKASSIRYQWDKRYIPGEVKWWDWNWTIQQNGLPTMQNNLAKVLRPVRAGITGDFSAESQFAGNIEIGAPVPVAAASHSSRARNLSAGQGLRLEIPLDAQELSGLGFNNVSLSVTPAANQ.

An N-terminal signal peptide occupies residues 1–23 (MKKLKITGLSLIISGLLMAQAQA). 2 disulfides stabilise this stretch: cysteine 42/cysteine 98 and cysteine 182/cysteine 187. An interaction with host N-linked glycan region spans residues 68-84 (WQISGLANGWVIMGPGY). The interval 256–288 (YGLSEKVTTKNKFKWPLVGETELSIEIAANQSW) is part of the transmembrane beta-barrel after proteolytic activation of the toxin and insertion into the host membrane. Positions 346 to 355 (RWGGNAWYTH) are interaction with glycans from host GPI-anchor. The propeptide occupies 446-492 (AAASHSSRARNLSAGQGLRLEIPLDAQELSGLGFNNVSLSVTPAANQ).

Belongs to the aerolysin family. As to quaternary structure, homodimer in solution; homoheptamer in the host membrane. After binding to GPI-anchored proteins in target membranes and proteolytic removal of the C-terminal propeptide, the protein assembles into a heptameric pre-pore complex. A further conformation change leads to insertion into the host membrane. Post-translationally, proteolytic cleavage and subsequent release of the propeptide trigger a major conformation change, leading to the formation of a heptameric pre-pore that then inserts into the host membrane.

It is found in the secreted. The protein resides in the host cell membrane. Its function is as follows. Secreted, cytolytic toxin that forms pores in host membranes after proteolytic removal of a C-terminal propeptide, leading to destruction of the membrane permeability barrier and cell death. The pores are formed by transmembrane beta-strands and are approximately 3 nm in diameter. This is Aerolysin-4 (ahh4) from Aeromonas hydrophila.